Consider the following 429-residue polypeptide: Glutamate-1-semialdehyde 2,1-aminomutase 2 (429 aa).

K268 carries the N6-(pyridoxal phosphate)lysine modification.

This sequence belongs to the class-III pyridoxal-phosphate-dependent aminotransferase family. HemL subfamily. As to quaternary structure, homodimer. Pyridoxal 5'-phosphate serves as cofactor.

The protein resides in the cytoplasm. The enzyme catalyses (S)-4-amino-5-oxopentanoate = 5-aminolevulinate. Its pathway is porphyrin-containing compound metabolism; protoporphyrin-IX biosynthesis; 5-aminolevulinate from L-glutamyl-tRNA(Glu): step 2/2. The polypeptide is Glutamate-1-semialdehyde 2,1-aminomutase 2 (Halalkalibacterium halodurans (strain ATCC BAA-125 / DSM 18197 / FERM 7344 / JCM 9153 / C-125) (Bacillus halodurans)).